The sequence spans 792 residues: Genome polyprotein (792 aa).

Positions 1-15 are interaction with host EXOC1; the sequence is MNNQRKKTGNPSFNM. Residues 1–101 are Cytoplasmic-facing; the sequence is MNNQRKKTGN…LNIMNRRRRS (101 aa). The interval 37–72 is hydrophobic; homodimerization of capsid protein C; it reads LLSGQGPMKLVMAFVAFLRFLAIPPTAGILKRWGSF. The propeptide at 101 to 114 is ER anchor for the capsid protein C, removed in mature form by serine protease NS3; it reads SVTMILMLLPTALA. The helical transmembrane segment at 102 to 119 threads the bilayer; that stretch reads VTMILMLLPTALAFHLTT. Residues 120 to 242 are Extracellular-facing; it reads RGGEPTLIVS…QIQKVETWAL (123 aa). Residue asparagine 183 is glycosylated (N-linked (GlcNAc...) asparagine; by host). The chain crosses the membrane as a helical span at residues 243–260; that stretch reads RHPGFTVIGLFLAHAIGT. Position 261 (serine 261) is a topological domain, cytoplasmic. The chain crosses the membrane as a helical span at residues 262–280; that stretch reads ITQKGIIFILLMLVTPSMA. At 281-725 the chain is on the extracellular side; sequence MRCVGIGNRD…IHQIFGTAYG (445 aa). 4 cysteine pairs are disulfide-bonded: cysteine 283–cysteine 310, cysteine 340–cysteine 401, cysteine 354–cysteine 385, and cysteine 372–cysteine 396. Asparagine 347 carries an N-linked (GlcNAc...) asparagine; by host glycan. The fusion peptide stretch occupies residues 378 to 391; it reads DRGWGNGCGLFGKG. Residue asparagine 433 is glycosylated (N-linked (GlcNAc...) asparagine; by host). Intrachain disulfides connect cysteine 465–cysteine 565 and cysteine 582–cysteine 613. The helical transmembrane segment at 726 to 746 threads the bilayer; that stretch reads VLFSGVSWTMKIGIGILLTWL. The Cytoplasmic segment spans residues 747–752; sequence GLNSRS. A helical transmembrane segment spans residues 753–775; the sequence is TSLSMTCIAVGMVTLYLGVMVQA. The Extracellular portion of the chain corresponds to 776-792; it reads DSGCVINWKGKELKCGS. Residues cysteine 779 and cysteine 790 are joined by a disulfide bond.

As to quaternary structure, homodimer. Interacts (via N-terminus) with host EXOC1 (via C-terminus); this interaction results in EXOC1 degradation through the proteasome degradation pathway. Forms heterodimers with envelope protein E in the endoplasmic reticulum and Golgi. In terms of assembly, homodimer; in the endoplasmic reticulum and Golgi. Interacts with protein prM. Interacts with non-structural protein 1. As to quaternary structure, homodimer; Homohexamer when secreted. Interacts with envelope protein E. Specific enzymatic cleavages in vivo yield mature proteins. Cleavages in the lumen of endoplasmic reticulum are performed by host signal peptidase, wereas cleavages in the cytoplasmic side are performed by serine protease NS3. Signal cleavage at the 2K-4B site requires a prior NS3 protease-mediated cleavage at the 4A-2K site. In terms of processing, N-glycosylated. Post-translationally, N-glycosylated. The excreted form is glycosylated and this is required for efficient secretion of the protein from infected cells.

The protein resides in the virion. Its subcellular location is the host nucleus. The protein localises to the host cytoplasm. It localises to the host perinuclear region. It is found in the secreted. The protein resides in the virion membrane. Its subcellular location is the host endoplasmic reticulum membrane. In terms of biological role, plays a role in virus budding by binding to the cell membrane and gathering the viral RNA into a nucleocapsid that forms the core of a mature virus particle. During virus entry, may induce genome penetration into the host cytoplasm after hemifusion induced by the surface proteins. Can migrate to the cell nucleus where it modulates host functions. Overcomes the anti-viral effects of host EXOC1 by sequestering and degrading the latter through the proteasome degradation pathway. Its function is as follows. Inhibits RNA silencing by interfering with host Dicer. Functionally, prevents premature fusion activity of envelope proteins in trans-Golgi by binding to envelope protein E at pH6.0. After virion release in extracellular space, gets dissociated from E dimers. Acts as a chaperone for envelope protein E during intracellular virion assembly by masking and inactivating envelope protein E fusion peptide. prM is the only viral peptide matured by host furin in the trans-Golgi network probably to avoid catastrophic activation of the viral fusion activity in acidic Golgi compartment prior to virion release. prM-E cleavage is inefficient, and many virions are only partially matured. These uncleaved prM would play a role in immune evasion. In terms of biological role, may play a role in virus budding. Exerts cytotoxic effects by activating a mitochondrial apoptotic pathway through M ectodomain. May display a viroporin activity. Its function is as follows. Binds to host cell surface receptor and mediates fusion between viral and cellular membranes. Envelope protein is synthesized in the endoplasmic reticulum in the form of heterodimer with protein prM. They play a role in virion budding in the ER, and the newly formed immature particle is covered with 60 spikes composed of heterodimer between precursor prM and envelope protein E. The virion is transported to the Golgi apparatus where the low pH causes dissociation of PrM-E heterodimers and formation of E homodimers. prM-E cleavage is inefficient, and many virions are only partially matured. These uncleaved prM would play a role in immune evasion. Functionally, involved in immune evasion, pathogenesis and viral replication. Once cleaved off the polyprotein, is targeted to three destinations: the viral replication cycle, the plasma membrane and the extracellular compartment. Essential for viral replication. Required for formation of the replication complex and recruitment of other non-structural proteins to the ER-derived membrane structures. Excreted as a hexameric lipoparticle that plays a role against host immune response. Antagonizing the complement function. Binds to the host macrophages and dendritic cells. Inhibits signal transduction originating from Toll-like receptor 3 (TLR3). Disrupts the host endothelial glycocalyx layer of host pulmonary microvascular endothelial cells, inducing degradation of sialic acid and shedding of heparan sulfate proteoglycans. NS1 induces expression of sialidases, heparanase, and activates cathepsin L, which activates heparanase via enzymatic cleavage. These effects are probably linked to the endothelial hyperpermeability observed in severe dengue disease. This is Genome polyprotein from Aedes aegypti (Yellowfever mosquito).